The chain runs to 99 residues: Plastocyanin (99 aa).

The 99-residue stretch at 1–99 (VEVLLGASDG…AGMVGQVTVN (99 aa)) folds into the Plastocyanin-like domain. Cu cation contacts are provided by H37, C84, H87, and M92.

Belongs to the plastocyanin family. The cofactor is Cu(2+).

The protein localises to the plastid. Its subcellular location is the chloroplast thylakoid membrane. Participates in electron transfer between P700 and the cytochrome b6-f complex in photosystem I. The protein is Plastocyanin (PETE) of Vicia faba (Broad bean).